A 372-amino-acid polypeptide reads, in one-letter code: Spermidine/putrescine import ATP-binding protein PotA (372 aa).

The 239-residue stretch at 12-250 (VSIRSVRKVY…PRNRFVADFI (239 aa)) folds into the ABC transporter domain. ATP is bound at residue 48 to 55 (GPSGCGKT).

The protein belongs to the ABC transporter superfamily. Spermidine/putrescine importer (TC 3.A.1.11.1) family. The complex is composed of two ATP-binding proteins (PotA), two transmembrane proteins (PotB and PotC) and a solute-binding protein (PotD).

Its subcellular location is the cell inner membrane. It carries out the reaction ATP + H2O + polyamine-[polyamine-binding protein]Side 1 = ADP + phosphate + polyamineSide 2 + [polyamine-binding protein]Side 1.. Its function is as follows. Part of the ABC transporter complex PotABCD involved in spermidine/putrescine import. Responsible for energy coupling to the transport system. The chain is Spermidine/putrescine import ATP-binding protein PotA from Pseudomonas fluorescens (strain ATCC BAA-477 / NRRL B-23932 / Pf-5).